The primary structure comprises 332 residues: Autoinducer 2 import system permease protein LsrD (332 aa).

A run of 10 helical transmembrane segments spans residues 7 to 27 (YSWE…FGVI), 45 to 65 (ICIG…GMDI), 70 to 90 (TIGL…PLPL), 91 to 111 (AIII…GLII), 118 to 138 (LVIT…LSGM), 162 to 182 (FLGI…FWLL), 216 to 236 (VYAM…SYFG), 240 to 260 (SDLG…GGAN), 261 to 281 (IYGG…VGFL), and 288 to 308 (AGVP…VVVV).

This sequence belongs to the binding-protein-dependent transport system permease family. AraH/RbsC subfamily. The complex is composed of two ATP-binding proteins (LsrA), two transmembrane proteins (LsrC and LsrD) and a solute-binding protein (LsrB).

The protein localises to the cell inner membrane. In terms of biological role, part of the ABC transporter complex LsrABCD involved in autoinducer 2 (AI-2) import. Probably responsible for the translocation of the substrate across the membrane. The polypeptide is Autoinducer 2 import system permease protein LsrD (lsrD) (Salmonella paratyphi A (strain ATCC 9150 / SARB42)).